We begin with the raw amino-acid sequence, 117 residues long: Ribonuclease P protein component (117 aa).

It belongs to the RnpA family. Consists of a catalytic RNA component (M1 or rnpB) and a protein subunit.

The catalysed reaction is Endonucleolytic cleavage of RNA, removing 5'-extranucleotides from tRNA precursor.. Functionally, RNaseP catalyzes the removal of the 5'-leader sequence from pre-tRNA to produce the mature 5'-terminus. It can also cleave other RNA substrates such as 4.5S RNA. The protein component plays an auxiliary but essential role in vivo by binding to the 5'-leader sequence and broadening the substrate specificity of the ribozyme. This is Ribonuclease P protein component from Lactococcus lactis subsp. lactis (strain IL1403) (Streptococcus lactis).